Reading from the N-terminus, the 454-residue chain is F-box/WD-40 repeat-containing protein At3g52030 (454 aa).

Residues 20 to 66 enclose the F-box domain; that stretch reads PTSIESLDADILCIIFSFLDLFDLVHCTVVCNSWNAVIKRLKLLQAS. 8 WD repeats span residues 85 to 116, 117 to 153, 170 to 214, 215 to 255, 258 to 296, 301 to 340, 343 to 383, and 422 to 454; these read DRPA…RWEA, HSHR…CMEE, SKKL…SIFP, SRAG…CSQI, TQGG…PVAT, ITAG…RLWE, VSPN…VLSR, and KVRP…FNLS.

This is F-box/WD-40 repeat-containing protein At3g52030 from Arabidopsis thaliana (Mouse-ear cress).